The primary structure comprises 235 residues: uncharacterized protein (235 aa).

The protein belongs to the UreF family.

It is found in the cytoplasm. Its subcellular location is the nucleus. Probably facilitates nickel incorporation. This is an uncharacterized protein from Schizosaccharomyces pombe (strain 972 / ATCC 24843) (Fission yeast).